The chain runs to 429 residues: 3-phosphoshikimate 1-carboxyvinyltransferase (429 aa).

Positions 11, 12, and 16 each coordinate 3-phosphoshikimate. Residue Lys11 coordinates phosphoenolpyruvate. Phosphoenolpyruvate contacts are provided by Gly82 and Arg110. The 3-phosphoshikimate site is built by Ser155, Gln157, Asp302, and Lys329. Residue Gln157 coordinates phosphoenolpyruvate. Residue Asp302 is the Proton acceptor of the active site. Arg333 and Arg385 together coordinate phosphoenolpyruvate.

This sequence belongs to the EPSP synthase family. As to quaternary structure, monomer.

The protein resides in the cytoplasm. It catalyses the reaction 3-phosphoshikimate + phosphoenolpyruvate = 5-O-(1-carboxyvinyl)-3-phosphoshikimate + phosphate. It participates in metabolic intermediate biosynthesis; chorismate biosynthesis; chorismate from D-erythrose 4-phosphate and phosphoenolpyruvate: step 6/7. Catalyzes the transfer of the enolpyruvyl moiety of phosphoenolpyruvate (PEP) to the 5-hydroxyl of shikimate-3-phosphate (S3P) to produce enolpyruvyl shikimate-3-phosphate and inorganic phosphate. The sequence is that of 3-phosphoshikimate 1-carboxyvinyltransferase from Helicobacter pylori (strain ATCC 700392 / 26695) (Campylobacter pylori).